The following is a 301-amino-acid chain: MRYFKEEVAGMKYGIYFAYWTKEWFADYKKYMDKVSALGFDVLEISCAALRDVYTTKEQLIELREYAKEKGLVLTAGYGPTKAENLCSEDPEAVRRAMTFFKDLLPKLQLMDIHILGGGLYSYWPVDFTINNDKQGDRARAVRNLRELSKTAEECDVVLGMEVLNRYEGYILNTCEEAIDFVDEIGSSHVKIMLDTFHMNIEETNMADAIRKAGDRLGHLHLGEQNRLVPGKGSLPWAEIGQALRDINYQGAAVMEPFVMQGGTIGSEIKVWRDMVPDLSEEALDRDAKGALEFCRHVFGI.

Y16 serves as a coordination point for substrate. The active-site Proton donor/acceptor is the E162. E162 lines the Mn(2+) pocket. Substrate contacts are provided by residues E168 and 195–198 (DTFH). The Mn(2+) site is built by D195 and H221. R227 is a substrate binding site. The active-site Proton donor/acceptor is E256. E256 serves as a coordination point for Mn(2+).

Belongs to the hyi family. As to quaternary structure, homotetramer. Requires Mn(2+) as cofactor. Co(2+) serves as cofactor.

It catalyses the reaction D-allulose = keto-D-fructose. Its activity is regulated as follows. Completely inhibited by EDTA and partially inhibited by Zn(2+), Mg(2+) and Cu(2+). Involved in the biosynthesis of D-psicose. Catalyzes the reversible epimerization of D-fructose at the C3 position to yield D-psicose. The enzyme is highly specific for D-psicose and shows very low activity with D-tagatose. This Enterocloster bolteae (strain ATCC BAA-613 / DSM 15670 / CCUG 46953 / JCM 12243 / WAL 16351) (Clostridium bolteae) protein is D-psicose 3-epimerase.